The chain runs to 245 residues: Probable phosphatase YcdX (245 aa).

Positions 7, 9, 15, 40, 73, 101, 131, 192, and 194 each coordinate Zn(2+).

It belongs to the PHP family. As to quaternary structure, homotrimer. It depends on Zn(2+) as a cofactor.

The protein is Probable phosphatase YcdX of Escherichia coli O81 (strain ED1a).